The sequence spans 648 residues: ABC transporter G family member 14 (648 aa).

One can recognise an ABC transporter domain in the interval 53–304 (LKFEEVVYKV…FSSLGFSTSL (252 aa)). 99–106 (GPSGSGKT) lines the ATP pocket. An N-linked (GlcNAc...) asparagine glycan is attached at N346. One can recognise an ABC transmembrane type-2 domain in the interval 384-590 (YQFTVLLQRG…CYKLLLGIQY (207 aa)). Transmembrane regions (helical) follow at residues 405 to 425 (LRIFQVISVAFLGGLLWWHTP), 435 to 455 (LLFFFSVFWGFYPLYNAVFTF), 485 to 505 (LPLELALPTAFVFIIYWMGGL), 512 to 532 (FILSLLVVLYSVLVAQGLGLA), 543 to 562 (ATTLASVTTLVFLIAGGYYV), 569 to 591 (IVWLKYLSYSYYCYKLLLGIQYT), and 620 to 640 (LWIDVFVMGVMLVGYRLMAYM).

The protein belongs to the ABC transporter superfamily. ABCG family. Eye pigment precursor importer (TC 3.A.1.204) subfamily. In terms of assembly, forms heterodimers with ABCG11. Accumulates primarily in the pericycle and stelar cells of roots. Expressed in leaves, stems, flowers and siliques, and, at low levels, in roots. Accumulates in the phloem.

The protein localises to the cell membrane. Positive regulator of plant growth which acts as an efflux pump involved in the major root-to-shoot (acropetal) long-distance cytokinin (CK) transport via the xylem sap. Together with ABCG9 and ABCG11, required for vascular development by regulating lipid/sterol homeostasis. Involved in CK-dependent responses to oxidative stress such as hydrogen peroxide H(2)O(2). Functionally, (Microbial infection) Required for SNC1-mediated defense response against the virulent pathogen Pseudomonas syringae pv. tomato DC3000 by promoting the accumulation of trans-zeatin (tZ)-type cytokinins (CK) in the shoot. This chain is ABC transporter G family member 14, found in Arabidopsis thaliana (Mouse-ear cress).